The primary structure comprises 347 residues: MPTPLTLADFDYHLPPELIAQSPAAERGGSRLLHLDAASRLHDRRFPDLAGLLRPHDLLVFNDTRVIKARLTGQKATGGKVEVLVERITAPDRALVHVRASKSPGPGMRLRLAEAFEAEVLGREGELFDLRFPAPVLDLLDAHGATPLPPYITHAADATDERRYQTVYAREPGAVAAPTAGLHFDQPMLEQLAAQGVQRAFVTLHVGAGTFQPVRVQNLAEHIMHAEWYTVPEATVAAIARARAHGGRIVAVGTTSVRALESAAAQAQDGPLAAAQGDTRLFITPGYRYRIVDALLTNFHLPQSTLLMLVSALAGVAPIRRAYAHAVAERYRFFSYGDAMFIETPAP.

The protein belongs to the QueA family. As to quaternary structure, monomer.

Its subcellular location is the cytoplasm. It carries out the reaction 7-aminomethyl-7-carbaguanosine(34) in tRNA + S-adenosyl-L-methionine = epoxyqueuosine(34) in tRNA + adenine + L-methionine + 2 H(+). It functions in the pathway tRNA modification; tRNA-queuosine biosynthesis. Its function is as follows. Transfers and isomerizes the ribose moiety from AdoMet to the 7-aminomethyl group of 7-deazaguanine (preQ1-tRNA) to give epoxyqueuosine (oQ-tRNA). This Bordetella bronchiseptica (strain ATCC BAA-588 / NCTC 13252 / RB50) (Alcaligenes bronchisepticus) protein is S-adenosylmethionine:tRNA ribosyltransferase-isomerase.